Here is a 342-residue protein sequence, read N- to C-terminus: UDP-xylose transporter 1 (342 aa).

The next 10 membrane-spanning stretches (helical) occupy residues 7–27 (MQMG…SIVI), 36–56 (LGFP…YCTL), 75–95 (VVLF…SLGF), 100–120 (FYQM…TLFL), 132–152 (LFLL…LNFV), 154–174 (SVLS…TNTI), 184–204 (QLLY…GPFV), 221–241 (IVVG…FSTF), 250–270 (VTYQ…GYTL), and 280–300 (IAGI…CSVA). The disordered stretch occupies residues 305 to 342 (QASSDSTFLGKDRDTTPLLGQENENHHEAKKLDKHSPV). The segment covering 327 to 342 (NENHHEAKKLDKHSPV) has biased composition (basic and acidic residues).

Belongs to the TPT transporter family. TPT (TC 2.A.7.9) subfamily. Ubiquitous.

Its subcellular location is the golgi apparatus membrane. The protein localises to the endoplasmic reticulum membrane. In terms of biological role, nucleotide-sugar transporter that transports UDP-xylose and UMP in a strict counter-exchange mode. The polypeptide is UDP-xylose transporter 1 (Arabidopsis thaliana (Mouse-ear cress)).